A 599-amino-acid polypeptide reads, in one-letter code: Aspartate--tRNA(Asp/Asn) ligase (599 aa).

Glu172 provides a ligand contact to L-aspartate. The segment at 196 to 199 (QLFK) is aspartate. Arg218 provides a ligand contact to L-aspartate. ATP is bound by residues 218-220 (RDE) and Gln227. His451 serves as a coordination point for L-aspartate. Glu485 lines the ATP pocket. An L-aspartate-binding site is contributed by Arg492. Position 537-540 (537-540 (GLDR)) interacts with ATP.

The protein belongs to the class-II aminoacyl-tRNA synthetase family. Type 1 subfamily. Homodimer.

It is found in the cytoplasm. The catalysed reaction is tRNA(Asx) + L-aspartate + ATP = L-aspartyl-tRNA(Asx) + AMP + diphosphate. In terms of biological role, aspartyl-tRNA synthetase with relaxed tRNA specificity since it is able to aspartylate not only its cognate tRNA(Asp) but also tRNA(Asn). Reaction proceeds in two steps: L-aspartate is first activated by ATP to form Asp-AMP and then transferred to the acceptor end of tRNA(Asp/Asn). In Aromatoleum aromaticum (strain DSM 19018 / LMG 30748 / EbN1) (Azoarcus sp. (strain EbN1)), this protein is Aspartate--tRNA(Asp/Asn) ligase.